Here is a 319-residue protein sequence, read N- to C-terminus: Formimidoylglutamase (319 aa).

6 residues coordinate Mn(2+): H131, D154, H156, D158, C248, and D250.

Belongs to the arginase family. The cofactor is Mn(2+).

The catalysed reaction is N-formimidoyl-L-glutamate + H2O = formamide + L-glutamate. It functions in the pathway amino-acid degradation; L-histidine degradation into L-glutamate; L-glutamate from N-formimidoyl-L-glutamate (hydrolase route): step 1/1. In terms of biological role, catalyzes the conversion of N-formimidoyl-L-glutamate to L-glutamate and formamide. This is Formimidoylglutamase from Legionella pneumophila (strain Lens).